The primary structure comprises 365 residues: UDP-N-acetylglucosamine--N-acetylmuramyl-(pentapeptide) pyrophosphoryl-undecaprenol N-acetylglucosamine transferase (365 aa).

UDP-N-acetyl-alpha-D-glucosamine contacts are provided by residues 19–21 (TGG), asparagine 131, arginine 170, serine 201, isoleucine 255, 274–279 (ALTVTE), and glutamine 300.

This sequence belongs to the glycosyltransferase 28 family. MurG subfamily.

Its subcellular location is the cell inner membrane. The catalysed reaction is di-trans,octa-cis-undecaprenyl diphospho-N-acetyl-alpha-D-muramoyl-L-alanyl-D-glutamyl-meso-2,6-diaminopimeloyl-D-alanyl-D-alanine + UDP-N-acetyl-alpha-D-glucosamine = di-trans,octa-cis-undecaprenyl diphospho-[N-acetyl-alpha-D-glucosaminyl-(1-&gt;4)]-N-acetyl-alpha-D-muramoyl-L-alanyl-D-glutamyl-meso-2,6-diaminopimeloyl-D-alanyl-D-alanine + UDP + H(+). It participates in cell wall biogenesis; peptidoglycan biosynthesis. Functionally, cell wall formation. Catalyzes the transfer of a GlcNAc subunit on undecaprenyl-pyrophosphoryl-MurNAc-pentapeptide (lipid intermediate I) to form undecaprenyl-pyrophosphoryl-MurNAc-(pentapeptide)GlcNAc (lipid intermediate II). The sequence is that of UDP-N-acetylglucosamine--N-acetylmuramyl-(pentapeptide) pyrophosphoryl-undecaprenol N-acetylglucosamine transferase from Acinetobacter baumannii (strain SDF).